A 147-amino-acid polypeptide reads, in one-letter code: Transcriptional repressor NrdR (147 aa).

A zinc finger spans residues 3 to 34; it reads CPFCGHEDTQVAETRESDEGDVIRRRRRCPSC. Positions 49 to 139 constitute an ATP-cone domain; the sequence is PAIVKKDGSR…VYRSFEGVDE (91 aa).

It belongs to the NrdR family. It depends on Zn(2+) as a cofactor.

Negatively regulates transcription of bacterial ribonucleotide reductase nrd genes and operons by binding to NrdR-boxes. This chain is Transcriptional repressor NrdR, found in Methylibium petroleiphilum (strain ATCC BAA-1232 / LMG 22953 / PM1).